A 187-amino-acid polypeptide reads, in one-letter code: GTP cyclohydrolase 1 (187 aa).

3 residues coordinate Zn(2+): cysteine 76, histidine 79, and cysteine 148.

This sequence belongs to the GTP cyclohydrolase I family. In terms of assembly, toroid-shaped homodecamer, composed of two pentamers of five dimers.

It carries out the reaction GTP + H2O = 7,8-dihydroneopterin 3'-triphosphate + formate + H(+). It functions in the pathway cofactor biosynthesis; 7,8-dihydroneopterin triphosphate biosynthesis; 7,8-dihydroneopterin triphosphate from GTP: step 1/1. The polypeptide is GTP cyclohydrolase 1 (Streptococcus agalactiae serotype Ia (strain ATCC 27591 / A909 / CDC SS700)).